The following is a 35-amino-acid chain: Photosystem II reaction center protein T (35 aa).

The chain crosses the membrane as a helical span at residues 3-23; that stretch reads ALVYTFLLVSTLGIIFFAIFF.

This sequence belongs to the PsbT family. In terms of assembly, PSII is composed of 1 copy each of membrane proteins PsbA, PsbB, PsbC, PsbD, PsbE, PsbF, PsbH, PsbI, PsbJ, PsbK, PsbL, PsbM, PsbT, PsbY, PsbZ, Psb30/Ycf12, at least 3 peripheral proteins of the oxygen-evolving complex and a large number of cofactors. It forms dimeric complexes.

The protein localises to the plastid. The protein resides in the chloroplast thylakoid membrane. Its function is as follows. Found at the monomer-monomer interface of the photosystem II (PS II) dimer, plays a role in assembly and dimerization of PSII. PSII is a light-driven water plastoquinone oxidoreductase, using light energy to abstract electrons from H(2)O, generating a proton gradient subsequently used for ATP formation. The polypeptide is Photosystem II reaction center protein T (Ceratophyllum demersum (Rigid hornwort)).